A 567-amino-acid polypeptide reads, in one-letter code: Glutamine-dependent NAD(+) synthetase (567 aa).

The region spanning 2-242 is the CN hydrolase domain; it reads LNLTLAQLNF…EDILTVTLDL (241 aa). Residue glutamate 41 is the Proton acceptor; for glutaminase activity of the active site. The active-site For glutaminase activity is lysine 109. Residue tyrosine 115 participates in L-glutamine binding. The Nucleophile; for glutaminase activity role is filled by cysteine 145. Serine 172 and lysine 178 together coordinate L-glutamine. The ligase stretch occupies residues 287-567; it reads PKEEEEIYAA…RMPVTNKFFK (281 aa). An ATP-binding site is contributed by 316-323; it reads GLSGGIDS. Asparagine 399 contacts deamido-NAD(+). Threonine 423 contributes to the ATP binding site. Deamido-NAD(+) is bound by residues glutamate 428 and lysine 538.

In the C-terminal section; belongs to the NAD synthetase family.

The enzyme catalyses deamido-NAD(+) + L-glutamine + ATP + H2O = L-glutamate + AMP + diphosphate + NAD(+) + H(+). Its pathway is cofactor biosynthesis; NAD(+) biosynthesis; NAD(+) from deamido-NAD(+) (L-Gln route): step 1/1. Catalyzes the ATP-dependent amidation of deamido-NAD to form NAD. Uses L-glutamine as a nitrogen source. The sequence is that of Glutamine-dependent NAD(+) synthetase from Aquifex aeolicus (strain VF5).